Reading from the N-terminus, the 190-residue chain is Guanylate kinase (190 aa).

One can recognise a Guanylate kinase-like domain in the interval 7-186; the sequence is GKLIVFSAPS…AVDDVEAAIV (180 aa). Residue 14–21 participates in ATP binding; that stretch reads APSGAGKT.

This sequence belongs to the guanylate kinase family.

It localises to the cytoplasm. It carries out the reaction GMP + ATP = GDP + ADP. In terms of biological role, essential for recycling GMP and indirectly, cGMP. This is Guanylate kinase from Chlorobium chlorochromatii (strain CaD3).